The following is a 356-amino-acid chain: DNA polymerase IV (356 aa).

The region spanning 1–188 (MDTSRKIIHI…IPVTKFYGVG (188 aa)) is the UmuC domain. Residues D11 and D106 each contribute to the Mg(2+) site. E107 is an active-site residue.

This sequence belongs to the DNA polymerase type-Y family. As to quaternary structure, monomer. The cofactor is Mg(2+).

It localises to the cytoplasm. The enzyme catalyses DNA(n) + a 2'-deoxyribonucleoside 5'-triphosphate = DNA(n+1) + diphosphate. Poorly processive, error-prone DNA polymerase involved in untargeted mutagenesis. Copies undamaged DNA at stalled replication forks, which arise in vivo from mismatched or misaligned primer ends. These misaligned primers can be extended by PolIV. Exhibits no 3'-5' exonuclease (proofreading) activity. May be involved in translesional synthesis, in conjunction with the beta clamp from PolIII. The polypeptide is DNA polymerase IV (Listeria monocytogenes serotype 4b (strain F2365)).